The primary structure comprises 128 residues: Large-conductance mechanosensitive channel (128 aa).

2 consecutive transmembrane segments (helical) span residues 10-30 (FAMR…GAFG) and 76-96 (GMFI…FLMI).

It belongs to the MscL family. In terms of assembly, homopentamer.

It is found in the cell inner membrane. In terms of biological role, channel that opens in response to stretch forces in the membrane lipid bilayer. May participate in the regulation of osmotic pressure changes within the cell. This is Large-conductance mechanosensitive channel from Actinobacillus succinogenes (strain ATCC 55618 / DSM 22257 / CCUG 43843 / 130Z).